A 244-amino-acid chain; its full sequence is Diablo homolog, mitochondrial (244 aa).

Residues 1 to 38 constitute a mitochondrion transit peptide; sequence MASLPRRLIWSFSYILRESFPIVSRRNCVSLLRASWRK. Residues 50 to 54 carry the IAP-binding motif; that stretch reads AIPVG. The span at 207–218 shows a compositional bias: basic and acidic residues; that stretch reads DEIKRTITEDKG. The disordered stretch occupies residues 207–244; that stretch reads DEIKRTITEDKGNPPSGGSPRSSLSEEEEIPEAYLRED. Low complexity predominate over residues 220–229; sequence PPSGGSPRSS.

It belongs to the Smac/DIABLO protein family. In terms of assembly, homodimer.

It localises to the mitochondrion. In terms of biological role, promotes apoptosis. Acts by opposing the inhibitory activity of inhibitor of apoptosis proteins (IAP). The polypeptide is Diablo homolog, mitochondrial (Xenopus tropicalis (Western clawed frog)).